Here is a 272-residue protein sequence, read N- to C-terminus: Eukaryotic translation initiation factor 3 subunit G (272 aa).

2 disordered regions span residues 1 to 28 (MPAL…PTEI) and 143 to 187 (AGKA…RGRD). An RRM domain is found at 190–268 (TAIRISNLSE…LILNVEWSKP (79 aa)).

This sequence belongs to the eIF-3 subunit G family. Component of the eukaryotic translation initiation factor 3 (eIF-3) complex.

The protein resides in the cytoplasm. RNA-binding component of the eukaryotic translation initiation factor 3 (eIF-3) complex, which is involved in protein synthesis of a specialized repertoire of mRNAs and, together with other initiation factors, stimulates binding of mRNA and methionyl-tRNAi to the 40S ribosome. The eIF-3 complex specifically targets and initiates translation of a subset of mRNAs involved in cell proliferation. This subunit can bind 18S rRNA. The polypeptide is Eukaryotic translation initiation factor 3 subunit G (Culex quinquefasciatus (Southern house mosquito)).